Consider the following 309-residue polypeptide: Porphobilinogen deaminase (309 aa).

S-(dipyrrolylmethanemethyl)cysteine is present on C244.

The protein belongs to the HMBS family. In terms of assembly, monomer. Requires dipyrromethane as cofactor.

The catalysed reaction is 4 porphobilinogen + H2O = hydroxymethylbilane + 4 NH4(+). The protein operates within porphyrin-containing compound metabolism; protoporphyrin-IX biosynthesis; coproporphyrinogen-III from 5-aminolevulinate: step 2/4. Its function is as follows. Tetrapolymerization of the monopyrrole PBG into the hydroxymethylbilane pre-uroporphyrinogen in several discrete steps. This is Porphobilinogen deaminase from Listeria welshimeri serovar 6b (strain ATCC 35897 / DSM 20650 / CCUG 15529 / CIP 8149 / NCTC 11857 / SLCC 5334 / V8).